Here is a 144-residue protein sequence, read N- to C-terminus: Probable disulfide formation protein (144 aa).

A helical transmembrane segment spans residues 10–29; sequence WNLLLLTWLVALISTLSALF. Residues Cys39 and Cys42 are joined by a disulfide bond. A run of 2 helical transmembrane segments spans residues 44 to 63 and 70 to 87; these read FQRAFMFPLTVILAIACYRS and YALPLTVIGAALAFVHTL. An intrachain disulfide couples Cys100 to Cys107. The chain crosses the membrane as a helical span at residues 116-138; that stretch reads GVVPLPALALFAFIIIAILLIII.

It belongs to the DsbB family. BdbC subfamily.

It is found in the cell inner membrane. Required for disulfide bond formation in some proteins. In Metapseudomonas resinovorans (Pseudomonas resinovorans), this protein is Probable disulfide formation protein.